Here is a 295-residue protein sequence, read N- to C-terminus: Cbb3-type cytochrome c oxidase subunit CcoP (295 aa).

Residues 1-31 lie on the Cytoplasmic side of the membrane; sequence MAQKEKDALSGVETTGHEWDGLRELNNPLPK. The helical transmembrane segment at 32–52 threads the bilayer; sequence WWLYIFYVCIAWSLVYYVLYP. Over 53 to 295 the chain is Periplasmic; that stretch reads AWPLGKSYTK…VYVHNLGGGK (243 aa). 2 Cytochrome c domains span residues 108-200 and 207-292; these read FAMA…LSLN and AAAE…HNLG. Positions 121, 124, 125, 175, 220, 223, 224, and 269 each coordinate heme c.

The protein belongs to the CcoP / FixP family. Component of the cbb3-type cytochrome c oxidase at least composed of CcoN, CcoO, CcoQ and CcoP. The cofactor is heme c.

The protein resides in the cell inner membrane. The protein operates within energy metabolism; oxidative phosphorylation. In terms of biological role, C-type cytochrome. Part of the cbb3-type cytochrome c oxidase complex. CcoP subunit is required for transferring electrons from donor cytochrome c via its heme groups to CcoO subunit. From there, electrons are shuttled to the catalytic binuclear center of CcoN subunit where oxygen reduction takes place. The complex also functions as a proton pump. In Azospirillum brasilense, this protein is Cbb3-type cytochrome c oxidase subunit CcoP.